The primary structure comprises 78 residues: D-alanyl carrier protein (78 aa).

The 78-residue stretch at 1-78 (MEFREQVLDL…KIVEALEELR (78 aa)) folds into the Carrier domain. An O-(pantetheine 4'-phosphoryl)serine modification is found at serine 36.

Belongs to the DltC family. 4'-phosphopantetheine is transferred from CoA to a specific serine of apo-DCP.

It is found in the cytoplasm. Its pathway is cell wall biogenesis; lipoteichoic acid biosynthesis. Functionally, carrier protein involved in the D-alanylation of lipoteichoic acid (LTA). The loading of thioester-linked D-alanine onto DltC is catalyzed by D-alanine--D-alanyl carrier protein ligase DltA. The DltC-carried D-alanyl group is further transferred to cell membrane phosphatidylglycerol (PG) by forming an ester bond, probably catalyzed by DltD. D-alanylation of LTA plays an important role in modulating the properties of the cell wall in Gram-positive bacteria, influencing the net charge of the cell wall. This chain is D-alanyl carrier protein, found in Staphylococcus epidermidis (strain ATCC 35984 / DSM 28319 / BCRC 17069 / CCUG 31568 / BM 3577 / RP62A).